Consider the following 88-residue polypeptide: Acylphosphatase (88 aa).

Residues 3–88 form the Acylphosphatase-like domain; that stretch reads RLVALVKGRV…EAGLKGFHVY (86 aa). Catalysis depends on residues R18 and N36.

It belongs to the acylphosphatase family.

The enzyme catalyses an acyl phosphate + H2O = a carboxylate + phosphate + H(+). The sequence is that of Acylphosphatase (acyP) from Thermus thermophilus (strain ATCC BAA-163 / DSM 7039 / HB27).